The sequence spans 117 residues: Hainantoxin-XV-4 (117 aa).

The first 20 residues, 1-20 (MKLCAVIIASLLVCVAVASS), serve as a signal peptide directing secretion. The disordered stretch occupies residues 20-55 (SSDNQKEFAQEKEMTREETQSLGEHEKDDEVTGSEE). Positions 21-56 (SDNQKEFAQEKEMTREETQSLGEHEKDDEVTGSEER) are excised as a propeptide. The span at 23 to 55 (NQKEFAQEKEMTREETQSLGEHEKDDEVTGSEE) shows a compositional bias: basic and acidic residues. 4 disulfides stabilise this stretch: Cys-58/Cys-72, Cys-65/Cys-78, Cys-69/Cys-115, and Cys-71/Cys-91.

It belongs to the neurotoxin 03 (Tx2) family. 02 subfamily. HNTX-XV sub-subfamily. Expressed by the venom gland.

The protein resides in the secreted. Putative ion channel inhibitor. This Cyriopagopus hainanus (Chinese bird spider) protein is Hainantoxin-XV-4.